Consider the following 385-residue polypeptide: Zinc finger protein B385R (385 aa).

The C2H2-type zinc-finger motif lies at 166 to 190; the sequence is LQCPNCGCIQELMGTIFDETHFYNH.

This sequence belongs to the asfivirus B385R family.

The chain is Zinc finger protein B385R from Ornithodoros (relapsing fever ticks).